The sequence spans 145 residues: uncharacterized protein (145 aa).

The interval 1 to 49 is disordered; the sequence is MLSIFKNLLGTSEEDGTTQEANSKDTKGLKEERKRKKRKNKYKIPPGHT. The span at 22-32 shows a compositional bias: basic and acidic residues; that stretch reads NSKDTKGLKEE. Residues 33 to 42 are compositionally biased toward basic residues; sequence RKRKKRKNKY. Phosphoserine is present on Ser68. Residues 69-145 enclose the Cytochrome b5 heme-binding domain; the sequence is PISVTAEELA…LKTSFVGYLV (77 aa). Residues His104 and His127 each contribute to the heme site.

It belongs to the cytochrome b5 family.

The protein localises to the cytoplasm. This is an uncharacterized protein from Schizosaccharomyces pombe (strain 972 / ATCC 24843) (Fission yeast).